The primary structure comprises 467 residues: H(+)/Cl(-) exchange transporter ClcA (467 aa).

Residues 1 to 30 lie on the Cytoplasmic side of the membrane; sequence MKSQTIPTRRVRGFRRAAVIRQLLSRDKTP. Residues 31–67 traverse the membrane as a helical segment; that stretch reads LTILLLASLTGVLAGLAGVAFEKAVAWVTAHRIEGLA. The Periplasmic segment spans residues 68 to 74; that stretch reads QVAHIPW. A helical membrane pass occupies residues 75-98; the sequence is LVWLLAFLFSALLAMVGYFLVRRF. Residues 99–106 are Cytoplasmic-facing; sequence APEAGGSG. The Selectivity filter part_1 motif lies at 104-108; sequence GSGIP. Serine 105 contributes to the chloride binding site. Residues 107–114 constitute an intramembrane region (helical); it reads IPEIEGAL. Residues 115 to 121 are Cytoplasmic-facing; that stretch reads EELRPVR. Residues 122 to 139 form a helical membrane-spanning segment; sequence WWRVLPVKFFGGMGTLGA. At 140–145 the chain is on the periplasmic side; that stretch reads GMVLGR. A Selectivity filter part_2 motif is present at residues 144–148; sequence GREGP. Residues 146–164 traverse the membrane as a helical segment; that stretch reads EGPMVQMGGNIGRMVLDIF. The Cytoplasmic segment spans residues 165–174; the sequence is HRPDAEARHT. 2 intramembrane regions (helical) span residues 175-187 and 191-199; these read LLAT…LAAA and PLAGILFII. At 200-212 the chain is on the cytoplasmic side; it reads EEMRTQFHYNLIS. Residues 213–230 traverse the membrane as a helical segment; the sequence is IKAVFTGVIMSTIVFRIF. Topologically, residues 231 to 250 are periplasmic; sequence NGEKSVIEVGQLTDAPVYTL. The chain crosses the membrane as a helical span at residues 251–279; sequence WLYLLLGIIFGAVGPLFNRLVLGMQDVFA. Topologically, residues 280–285 are cytoplasmic; it reads RIHGGN. A helical transmembrane segment spans residues 286–307; that stretch reads TTRWVLLGGAIGGACGLLALWE. Topologically, residues 308–327 are periplasmic; that stretch reads PAAAGGGFGLIPIAAAGNFT. A helical membrane pass occupies residues 328–347; the sequence is VGMLLFIFIARVVTTVFCFS. Over 348–352 the chain is Cytoplasmic; sequence SGAPG. Residues 353–357 carry the Selectivity filter part_3 motif; it reads GIFAP. The helical transmembrane segment at 353–374 threads the bilayer; it reads GIFAPMLALGTLLGSAFGMACA. Chloride contacts are provided by isoleucine 354 and phenylalanine 355. At 375-384 the chain is on the periplasmic side; it reads AWFPQWHLQA. An intramembrane region (helical) is located at residues 385 to 399; it reads GTFAIAGMGALLAAS. Residues 400-402 constitute an intramembrane region (note=Loop between two helices); sequence VRA. An intramembrane region (helical) is located at residues 403–414; sequence PITGIVLVLEMT. The note=Loop between two helices intramembrane region spans 415 to 419; the sequence is DNYQL. A helical membrane pass occupies residues 420–436; that stretch reads ILPMIITCLGATLLAQF. Residues 437-467 are Cytoplasmic-facing; it reads LGGKPLYSTILARTLAKQEAERQAQADGRNT. Tyrosine 443 lines the chloride pocket.

It belongs to the chloride channel (TC 2.A.49) family. ClcA subfamily. Homodimer.

It localises to the cell inner membrane. The enzyme catalyses 2 chloride(in) + H(+)(out) = 2 chloride(out) + H(+)(in). Functionally, proton-coupled chloride transporter. Functions as antiport system and exchanges two chloride ions for 1 proton. Probably acts as an electrical shunt for an outwardly-directed proton pump that is linked to amino acid decarboxylation, as part of the extreme acid resistance (XAR) response. This Cronobacter sakazakii (strain ATCC BAA-894) (Enterobacter sakazakii) protein is H(+)/Cl(-) exchange transporter ClcA.